The following is a 183-amino-acid chain: Acireductone dioxygenase (183 aa).

Fe(2+) contacts are provided by His-95, His-97, Glu-101, and His-139. Ni(2+) contacts are provided by His-95, His-97, Glu-101, and His-139.

Belongs to the acireductone dioxygenase (ARD) family. Monomer. It depends on Fe(2+) as a cofactor. Requires Ni(2+) as cofactor.

The enzyme catalyses 1,2-dihydroxy-5-(methylsulfanyl)pent-1-en-3-one + O2 = 3-(methylsulfanyl)propanoate + CO + formate + 2 H(+). It catalyses the reaction 1,2-dihydroxy-5-(methylsulfanyl)pent-1-en-3-one + O2 = 4-methylsulfanyl-2-oxobutanoate + formate + 2 H(+). Its pathway is amino-acid biosynthesis; L-methionine biosynthesis via salvage pathway; L-methionine from S-methyl-5-thio-alpha-D-ribose 1-phosphate: step 5/6. Catalyzes 2 different reactions between oxygen and the acireductone 1,2-dihydroxy-3-keto-5-methylthiopentene (DHK-MTPene) depending upon the metal bound in the active site. Fe-containing acireductone dioxygenase (Fe-ARD) produces formate and 2-keto-4-methylthiobutyrate (KMTB), the alpha-ketoacid precursor of methionine in the methionine recycle pathway. Ni-containing acireductone dioxygenase (Ni-ARD) produces methylthiopropionate, carbon monoxide and formate, and does not lie on the methionine recycle pathway. The chain is Acireductone dioxygenase from Aquifex aeolicus (strain VF5).